We begin with the raw amino-acid sequence, 423 residues long: Gamma-glutamyl phosphate reductase (423 aa).

The protein belongs to the gamma-glutamyl phosphate reductase family.

It is found in the cytoplasm. It catalyses the reaction L-glutamate 5-semialdehyde + phosphate + NADP(+) = L-glutamyl 5-phosphate + NADPH + H(+). It participates in amino-acid biosynthesis; L-proline biosynthesis; L-glutamate 5-semialdehyde from L-glutamate: step 2/2. Catalyzes the NADPH-dependent reduction of L-glutamate 5-phosphate into L-glutamate 5-semialdehyde and phosphate. The product spontaneously undergoes cyclization to form 1-pyrroline-5-carboxylate. The polypeptide is Gamma-glutamyl phosphate reductase (Pseudomonas putida (strain ATCC 47054 / DSM 6125 / CFBP 8728 / NCIMB 11950 / KT2440)).